Here is a 380-residue protein sequence, read N- to C-terminus: Tryptophan 2,3-dioxygenase (380 aa).

Residues 57 to 61 (FIITH) and Arg128 contribute to the substrate site. Residue His313 participates in heme binding. Thr328 serves as a coordination point for substrate.

It belongs to the tryptophan 2,3-dioxygenase family. As to quaternary structure, homotetramer. Dimer of dimers. Requires heme as cofactor.

The enzyme catalyses L-tryptophan + O2 = N-formyl-L-kynurenine. Its pathway is amino-acid degradation; L-tryptophan degradation via kynurenine pathway; L-kynurenine from L-tryptophan: step 1/2. It participates in pigment biosynthesis; ommochrome biosynthesis. Heme-dependent dioxygenase that catalyzes the oxidative cleavage of the L-tryptophan (L-Trp) pyrrole ring and converts L-tryptophan to N-formyl-L-kynurenine. Catalyzes the oxidative cleavage of the indole moiety. The chain is Tryptophan 2,3-dioxygenase from Drosophila virilis (Fruit fly).